We begin with the raw amino-acid sequence, 393 residues long: NAD(P)H-quinone oxidoreductase subunit H, chloroplastic (393 aa).

This sequence belongs to the complex I 49 kDa subunit family. NDH is composed of at least 16 different subunits, 5 of which are encoded in the nucleus.

The protein resides in the plastid. It localises to the chloroplast thylakoid membrane. The enzyme catalyses a plastoquinone + NADH + (n+1) H(+)(in) = a plastoquinol + NAD(+) + n H(+)(out). It carries out the reaction a plastoquinone + NADPH + (n+1) H(+)(in) = a plastoquinol + NADP(+) + n H(+)(out). Its function is as follows. NDH shuttles electrons from NAD(P)H:plastoquinone, via FMN and iron-sulfur (Fe-S) centers, to quinones in the photosynthetic chain and possibly in a chloroplast respiratory chain. The immediate electron acceptor for the enzyme in this species is believed to be plastoquinone. Couples the redox reaction to proton translocation, and thus conserves the redox energy in a proton gradient. This chain is NAD(P)H-quinone oxidoreductase subunit H, chloroplastic, found in Panax ginseng (Korean ginseng).